Here is a 297-residue protein sequence, read N- to C-terminus: 4-diphosphocytidyl-2-C-methyl-D-erythritol kinase (297 aa).

Lys-10 is a catalytic residue. Residue 95 to 105 (PVAGGMAGGSA) coordinates ATP. Residue Asp-137 is part of the active site.

This sequence belongs to the GHMP kinase family. IspE subfamily.

The enzyme catalyses 4-CDP-2-C-methyl-D-erythritol + ATP = 4-CDP-2-C-methyl-D-erythritol 2-phosphate + ADP + H(+). It participates in isoprenoid biosynthesis; isopentenyl diphosphate biosynthesis via DXP pathway; isopentenyl diphosphate from 1-deoxy-D-xylulose 5-phosphate: step 3/6. Catalyzes the phosphorylation of the position 2 hydroxy group of 4-diphosphocytidyl-2C-methyl-D-erythritol. In Streptomyces avermitilis (strain ATCC 31267 / DSM 46492 / JCM 5070 / NBRC 14893 / NCIMB 12804 / NRRL 8165 / MA-4680), this protein is 4-diphosphocytidyl-2-C-methyl-D-erythritol kinase.